The primary structure comprises 411 residues: Zinc metalloproteinase/disintegrin (411 aa).

An N-terminal signal peptide occupies residues 1–20 (MIEVLLVTICLAVFPYQGSS). The propeptide occupies 21-190 (IILESGNVND…KASQLYLTPE (170 aa)). One can recognise a Peptidase M12B domain in the interval 197–395 (RYVKLAIVVD…SKPQCILNAP (199 aa)). Asp-284 is a binding site for Ca(2+). 3 disulfides stabilise this stretch: Cys-308-Cys-390, Cys-352-Cys-374, and Cys-354-Cys-357. His-333 lines the Zn(2+) pocket. The active site involves Glu-334. Zn(2+)-binding residues include His-337 and His-343. The Ca(2+) site is built by Cys-390 and Asn-393. The propeptide occupies 396-411 (LRTDTVSTPVSGNEPL).

Belongs to the venom metalloproteinase (M12B) family. P-II subfamily. Monomer. It depends on Zn(2+) as a cofactor. As to expression, expressed by the venom gland.

The protein resides in the secreted. Its function is as follows. Snake venom metalloproteinase that impairs hemostasis in the envenomed animal. In Protobothrops mucrosquamatus (Taiwan habu), this protein is Zinc metalloproteinase/disintegrin.